The following is a 161-amino-acid chain: Vitamin K epoxide reductase complex subunit 1 (161 aa).

At 1 to 9 (MGTTWRSPG) the chain is on the cytoplasmic side. The helical transmembrane segment at 10–29 (LVRLALCLAGLALSLYALHV) threads the bilayer. Topologically, residues 30-80 (KAARARDENYRALCDVGTAISCSRVFSSRWGRGFGLVEHMLGADSVLNQSN) are lumenal. An intrachain disulfide couples cysteine 43 to cysteine 51. Asparagine 80 serves as a coordination point for (S)-warfarin. Residues 81-95 (SIFGCLFYTLQLLLG) traverse the membrane as a helical segment. The Cytoplasmic segment spans residues 96–100 (CLRGR). Residues 101 to 128 (WASILLVLSSLVSVAGSVYLAWILFFVL) traverse the membrane as a helical segment. Topologically, residues 129-131 (YDF) are lumenal. A disulfide bridge connects residues cysteine 132 and cysteine 135. Residues 132–153 (CIVCITTYAINVGLMLLSFQKV) traverse the membrane as a helical segment. Positions 135 and 139 each coordinate phylloquinone. Residue tyrosine 139 coordinates (S)-warfarin. Residues 154–161 (PEHKTKKH) are Cytoplasmic-facing.

The protein belongs to the VKOR family. In terms of tissue distribution, detected in liver.

The protein resides in the endoplasmic reticulum membrane. It catalyses the reaction phylloquinone + [protein]-disulfide + H2O = 2,3-epoxyphylloquinone + [protein]-dithiol. The catalysed reaction is phylloquinol + [protein]-disulfide = phylloquinone + [protein]-dithiol. Its activity is regulated as follows. Inhibited by warfarin (coumadin). Warfarin locks VKORC1 in both redox states into the closed conformation. Functionally, involved in vitamin K metabolism. Catalytic subunit of the vitamin K epoxide reductase (VKOR) complex which reduces inactive vitamin K 2,3-epoxide to active vitamin K. Vitamin K is required for the gamma-carboxylation of various proteins, including clotting factors, and is required for normal blood coagulation, but also for normal bone development. This Mus musculus (Mouse) protein is Vitamin K epoxide reductase complex subunit 1 (Vkorc1).